The sequence spans 1263 residues: Condensin complex subunit dpy-26 (1263 aa).

Residues 1–10 are compositionally biased toward polar residues; that stretch reads MDVPSSSNVT. Positions 1–29 are disordered; sequence MDVPSSSNVTGRRKRQVLDDDEDDGFRST. The stretch at 691–725 forms a coiled coil; sequence NEQMDETEVEERNEQDVQRELEDIALAADEVAELM. Disordered stretches follow at residues 1098–1118 and 1225–1263; these read YQAA…GTAN and FSNL…EMEE. Residues 1106-1118 show a composition bias toward polar residues; sequence NNQPTTSTYGTAN. Positions 1230-1241 are enriched in basic residues; sequence RRPKAVPVRKGR.

As to quaternary structure, component of the condensin I complex, which contains the mix-1/SMC2 and smc-4/SMC4 heterodimer, and three non SMC subunits that probably regulate the complex: dpy-26, capg-1 and dpy-28. Within the complex, interacts with dpy-28, mix-1, smc-4 and capg-1. Component of the dosage compensation complex, which consists of the condensin I-like components mix-1/SMC2 and dpy-27/SMC4, and the three non SMC subunits dpy-26, capg-1 and dpy-28. Within the complex, interacts with dpy-27, dpy-28, mix-1 and capg-1. The interaction with dpy-27 is required for dpy-27 protein stability. Interacts with smcl-1. As to expression, expressed in embryos and in somatic and germline tissues in L4 stage larvae (at protein level).

The protein localises to the nucleus. It localises to the chromosome. Its function is as follows. Required for both chromosome condensation and segregation and for X-chromosome dosage compensation depending on its binding partners. Member of the condensin I complex, a complex required for conversion of interphase chromatin into mitotic-like condense chromosomes and for proper chromosome segregation in mitosis and meiosis. As a member of the condensin I complex, further controls the crossover number and distribution in meiosis by restricting double strand break formation, probably by influencing higher-order chromosome structure. Plays a role in robust cytokinesis upon presence of chromatin obstructions. Also a member of the condensin I-like dosage compensation complex that associates specifically with hermaphrodite X chromosomes to reduce their gene transcription during interphase, possibly through chromatin reorganization. As a member of the dosage compensation complex, also binds to regulatory regions of the autosomal her-1 gene, required for male development, possibly contributing to its repression in hermaphrodites. In Caenorhabditis elegans, this protein is Condensin complex subunit dpy-26.